Reading from the N-terminus, the 731-residue chain is 1,4-alpha-glucan branching enzyme GlgB (731 aa).

The Nucleophile role is filled by aspartate 412. The Proton donor role is filled by glutamate 465.

Belongs to the glycosyl hydrolase 13 family. GlgB subfamily. Monomer.

It catalyses the reaction Transfers a segment of a (1-&gt;4)-alpha-D-glucan chain to a primary hydroxy group in a similar glucan chain.. Its pathway is glycan biosynthesis; glycogen biosynthesis. Its function is as follows. Catalyzes the formation of the alpha-1,6-glucosidic linkages in glycogen by scission of a 1,4-alpha-linked oligosaccharide from growing alpha-1,4-glucan chains and the subsequent attachment of the oligosaccharide to the alpha-1,6 position. This is 1,4-alpha-glucan branching enzyme GlgB from Bordetella parapertussis (strain 12822 / ATCC BAA-587 / NCTC 13253).